Here is a 137-residue protein sequence, read N- to C-terminus: Small ribosomal subunit protein uS12 (137 aa).

2 disordered regions span residues 1 to 21 (MPTI…KSKS) and 33 to 57 (KVQT…TPRK). Aspartate 102 bears the 3-methylthioaspartic acid mark.

It belongs to the universal ribosomal protein uS12 family. In terms of assembly, part of the 30S ribosomal subunit. Contacts proteins S8 and S17. May interact with IF1 in the 30S initiation complex.

Functionally, with S4 and S5 plays an important role in translational accuracy. Its function is as follows. Interacts with and stabilizes bases of the 16S rRNA that are involved in tRNA selection in the A site and with the mRNA backbone. Located at the interface of the 30S and 50S subunits, it traverses the body of the 30S subunit contacting proteins on the other side and probably holding the rRNA structure together. The combined cluster of proteins S8, S12 and S17 appears to hold together the shoulder and platform of the 30S subunit. In Streptococcus pneumoniae (strain ATCC 700669 / Spain 23F-1), this protein is Small ribosomal subunit protein uS12.